The following is a 274-amino-acid chain: MPFRSNNPITRDELLSRFFPQFHPVTTFNSGLSGGSFLIEHQGQRFVVRQPHDPDAPRFAFLRQYRALSQLPACIAPKPHLYLRDWMVVDYLPGEVKTYLPDTNELAGLLYYLHQQPRFGWRITLLPLLELYWQQSDPARRTVGWLRRLKRLRKAREPRPLRLSPLHMDVHAGNLVHSASGLKLIDWEYAGDGDIALELAAVWVENTDQHRQLVNDYATRAKIYPAQLWRQVRRWFPWLLMLKAGWFEYRWRQTGDQQFIRLADDTWRQLLIKQ.

This sequence belongs to the thiamine kinase family.

It catalyses the reaction thiamine + ATP = thiamine phosphate + ADP + H(+). It participates in cofactor biosynthesis; thiamine diphosphate biosynthesis; thiamine phosphate from thiamine: step 1/1. Catalyzes the ATP-dependent phosphorylation of thiamine to thiamine phosphate. Is involved in thiamine salvage. This Escherichia coli O17:K52:H18 (strain UMN026 / ExPEC) protein is Thiamine kinase.